The following is a 422-amino-acid chain: Tyrosine--tRNA ligase 1 (422 aa).

Position 36 (Tyr36) interacts with L-tyrosine. Positions Pro41–His50 match the 'HIGH' region motif. Residues Tyr173 and Gln177 each contribute to the L-tyrosine site. A 'KMSKS' region motif is present at residues Lys233–Thr237. Lys236 lines the ATP pocket. Residues Ser355–Leu419 form the S4 RNA-binding domain.

The protein belongs to the class-I aminoacyl-tRNA synthetase family. TyrS type 1 subfamily. In terms of assembly, homodimer.

It is found in the cytoplasm. The catalysed reaction is tRNA(Tyr) + L-tyrosine + ATP = L-tyrosyl-tRNA(Tyr) + AMP + diphosphate + H(+). Its function is as follows. Catalyzes the attachment of tyrosine to tRNA(Tyr) in a two-step reaction: tyrosine is first activated by ATP to form Tyr-AMP and then transferred to the acceptor end of tRNA(Tyr). The polypeptide is Tyrosine--tRNA ligase 1 (Vibrio vulnificus (strain YJ016)).